The primary structure comprises 128 residues: Large-conductance mechanosensitive channel (128 aa).

A run of 2 helical transmembrane segments spans residues 10–30 (FAMR…GAFG) and 76–96 (GMFI…FLMI).

The protein belongs to the MscL family. In terms of assembly, homopentamer.

Its subcellular location is the cell inner membrane. In terms of biological role, channel that opens in response to stretch forces in the membrane lipid bilayer. May participate in the regulation of osmotic pressure changes within the cell. The sequence is that of Large-conductance mechanosensitive channel from Actinobacillus succinogenes (strain ATCC 55618 / DSM 22257 / CCUG 43843 / 130Z).